The sequence spans 476 residues: Sulfate adenylyltransferase subunit 1 (476 aa).

The 216-residue stretch at 24–239 (KSMLRFLTCG…VLENVDIDQK (216 aa)) folds into the tr-type G domain. A G1 region spans residues 33 to 40 (GSVDDGKS). 33 to 40 (GSVDDGKS) is a binding site for GTP. The G2 stretch occupies residues 91–95 (GITID). The segment at 112-115 (DTPG) is G3. GTP is bound by residues 112–116 (DTPGH) and 167–170 (NKMD). Positions 167–170 (NKMD) are G4. A G5 region spans residues 205–207 (SAL).

The protein belongs to the TRAFAC class translation factor GTPase superfamily. Classic translation factor GTPase family. CysN/NodQ subfamily. In terms of assembly, heterodimer composed of CysD, the smaller subunit, and CysN.

The catalysed reaction is sulfate + ATP + H(+) = adenosine 5'-phosphosulfate + diphosphate. Its pathway is sulfur metabolism; hydrogen sulfide biosynthesis; sulfite from sulfate: step 1/3. Functionally, with CysD forms the ATP sulfurylase (ATPS) that catalyzes the adenylation of sulfate producing adenosine 5'-phosphosulfate (APS) and diphosphate, the first enzymatic step in sulfur assimilation pathway. APS synthesis involves the formation of a high-energy phosphoric-sulfuric acid anhydride bond driven by GTP hydrolysis by CysN coupled to ATP hydrolysis by CysD. The chain is Sulfate adenylyltransferase subunit 1 from Vibrio atlanticus (strain LGP32) (Vibrio splendidus (strain Mel32)).